The following is a 701-amino-acid chain: Interleukin-1 receptor accessory protein-like 1-A (701 aa).

The signal sequence occupies residues 1–19 (MTALNPVLFLLCGVSVSLS). Residues 20–361 (LKVVSKRGSV…IGKRVELMYT (342 aa)) are Extracellular-facing. The Ig-like C2-type 1 domain occupies 33-133 (TDWSVDYLKY…RNSTFCMKVS (101 aa)). A disulfide bond links C54 and C121. N-linked (GlcNAc...) asparagine glycosylation is found at N64, N125, N141, N216, N267, and N334. 2 consecutive Ig-like C2-type domains span residues 146–235 (CYNS…TYLS) and 245–353 (PRIL…VQIG). An intrachain disulfide couples C167 to C219. A disulfide bond links C270 and C337. Residues 362–382 (VELAGGLGAILLLLALLLSVY) traverse the membrane as a helical segment. Residues 383–701 (KCYRIELLLC…RETSISSVIW (319 aa)) are Cytoplasmic-facing. The 157-residue stretch at 407 to 563 (KEYDAYLSYS…RFWKQLRYTM (157 aa)) folds into the TIR domain. The active site involves E495. Residues 568–701 (PQQTITNHAL…RETSISSVIW (134 aa)) are required for synaptic vesicle accumulation during synaptogenesis.

It belongs to the interleukin-1 receptor family.

Its subcellular location is the cell membrane. It is found in the cytoplasm. It catalyses the reaction NAD(+) + H2O = ADP-D-ribose + nicotinamide + H(+). In terms of biological role, may regulate secretion and presynaptic differentiation through inhibition of the activity of N-type voltage-gated calcium channel. During presynaptic differentiation may regulate both synaptic vesicle accumulation in axon terminals and subsequent axon terminal remodeling. This chain is Interleukin-1 receptor accessory protein-like 1-A (il1rapl1a), found in Danio rerio (Zebrafish).